Here is a 478-residue protein sequence, read N- to C-terminus: Aspartyl/glutamyl-tRNA(Asn/Gln) amidotransferase subunit B (478 aa).

This sequence belongs to the GatB/GatE family. GatB subfamily. Heterotrimer of A, B and C subunits.

It catalyses the reaction L-glutamyl-tRNA(Gln) + L-glutamine + ATP + H2O = L-glutaminyl-tRNA(Gln) + L-glutamate + ADP + phosphate + H(+). The enzyme catalyses L-aspartyl-tRNA(Asn) + L-glutamine + ATP + H2O = L-asparaginyl-tRNA(Asn) + L-glutamate + ADP + phosphate + 2 H(+). Its function is as follows. Allows the formation of correctly charged Asn-tRNA(Asn) or Gln-tRNA(Gln) through the transamidation of misacylated Asp-tRNA(Asn) or Glu-tRNA(Gln) in organisms which lack either or both of asparaginyl-tRNA or glutaminyl-tRNA synthetases. The reaction takes place in the presence of glutamine and ATP through an activated phospho-Asp-tRNA(Asn) or phospho-Glu-tRNA(Gln). The sequence is that of Aspartyl/glutamyl-tRNA(Asn/Gln) amidotransferase subunit B from Dichelobacter nodosus (strain VCS1703A).